We begin with the raw amino-acid sequence, 322 residues long: Putative nickel/cobalt efflux system HI_1248 (322 aa).

Transmembrane regions (helical) follow at residues 7–27, 54–74, 100–120, 137–157, 228–248, and 294–314; these read GLVL…WFFL, AGTT…LGPG, LSSL…VVVL, TALL…LRAY, IFVL…LAVL, and LIAG…TTIS.

Belongs to the NiCoT transporter (TC 2.A.52) family.

Its subcellular location is the cell membrane. Its function is as follows. Efflux system for nickel and cobalt. This chain is Putative nickel/cobalt efflux system HI_1248, found in Haemophilus influenzae (strain ATCC 51907 / DSM 11121 / KW20 / Rd).